A 268-amino-acid polypeptide reads, in one-letter code: tRNA (guanine-N(1)-)-methyltransferase (268 aa).

S-adenosyl-L-methionine contacts are provided by residues G110 and 129–134; that span reads IGDFVM. The tract at residues 246–268 is disordered; it reads WGAPPAPVKRHRKRRPETTESAS.

Belongs to the RNA methyltransferase TrmD family. As to quaternary structure, homodimer.

Its subcellular location is the cytoplasm. It carries out the reaction guanosine(37) in tRNA + S-adenosyl-L-methionine = N(1)-methylguanosine(37) in tRNA + S-adenosyl-L-homocysteine + H(+). Functionally, specifically methylates guanosine-37 in various tRNAs. The chain is tRNA (guanine-N(1)-)-methyltransferase from Deinococcus deserti (strain DSM 17065 / CIP 109153 / LMG 22923 / VCD115).